The sequence spans 118 residues: Eukaryotic translation initiation factor 4E-binding protein 1 (118 aa).

Polar residues-rich tracts occupy residues 1–12 (MSGGSSCSQTPS) and 34–48 (YSTT…TTPG). 2 disordered regions span residues 1–20 (MSGG…ATRR) and 25–48 (DGVQ…TTPG). S2 is modified (N-acetylserine). Position 37 is a phosphothreonine; by MTOR (T37). T41 carries the phosphothreonine modification. S44 is subject to Phosphoserine. T46 is subject to Phosphothreonine; by MTOR. T50 carries the phosphothreonine modification. At Y54 the chain carries Phosphotyrosine. The short motif at 54–60 (YDRKFLM) is the YXXXXLphi motif element. K57 participates in a covalent cross-link: Glycyl lysine isopeptide (Lys-Gly) (interchain with G-Cter in ubiquitin). The tract at residues 64 to 118 (NSPVTKTPPRDLPTIPGVTSPSSDEPPMEASQSHLRNSPEDKRAGGEESQFEMDI) is disordered. Position 65 is a phosphoserine; by DYRK2, MAPK1, MAPK3 and MTOR (S65). T70 carries the phosphothreonine; by MTOR modification. T77 is modified (phosphothreonine). A phosphoserine mark is found at S83 and S96. The segment covering 100 to 109 (NSPEDKRAGG) has biased composition (basic and acidic residues). Position 101 is a phosphoserine; by DYRK2 (S101). At S112 the chain carries Phosphoserine. Residues 114–118 (FEMDI) carry the TOS motif motif.

This sequence belongs to the eIF4E-binding protein family. As to quaternary structure, hypophosphorylated EIF4EBP1 competes with EIF4G1/EIF4G3 to interact with EIF4E; insulin stimulated MAP-kinase (MAPK1 and MAPK3) or mTORC1 phosphorylation of EIF4EBP1 causes dissociation of the complex allowing EIF4G1/EIF4G3 to bind and consequent initiation of translation. Interacts (via TOS motif) with RPTOR; promoting phosphorylation by mTORC1. Post-translationally, phosphorylated on serine and threonine residues in response to insulin, EGF and PDGF. Phosphorylation at Thr-37, Thr-46, Ser-65 and Thr-70, corresponding to the hyperphosphorylated form, is regulated by mTORC1 and abolishes binding to EIF4E. In terms of processing, ubiquitinated: when eIF4E levels are low, hypophosphorylated form is ubiquitinated by the BCR(KLHL25) complex, leading to its degradation and serving as a homeostatic mechanism to maintain translation and prevent eIF4E inhibition when eIF4E levels are low. Not ubiquitinated when hyperphosphorylated (at Thr-37, Thr-46, Ser-65 and Thr-70) or associated with eIF4E.

It is found in the cytoplasm. The protein localises to the nucleus. In terms of biological role, repressor of translation initiation that regulates EIF4E activity by preventing its assembly into the eIF4F complex: hypophosphorylated form competes with EIF4G1/EIF4G3 and strongly binds to EIF4E, leading to repress translation. In contrast, hyperphosphorylated form dissociates from EIF4E, allowing interaction between EIF4G1/EIF4G3 and EIF4E, leading to initiation of translation. Mediates the regulation of protein translation by hormones, growth factors and other stimuli that signal through the MAP kinase and mTORC1 pathways. This Homo sapiens (Human) protein is Eukaryotic translation initiation factor 4E-binding protein 1 (EIF4EBP1).